The following is a 316-amino-acid chain: 4-hydroxy-3-methylbut-2-enyl diphosphate reductase (316 aa).

Cys-12 contributes to the [4Fe-4S] cluster binding site. Residues His-41 and His-74 each coordinate (2E)-4-hydroxy-3-methylbut-2-enyl diphosphate. Dimethylallyl diphosphate contacts are provided by His-41 and His-74. Residues His-41 and His-74 each coordinate isopentenyl diphosphate. Cys-96 serves as a coordination point for [4Fe-4S] cluster. (2E)-4-hydroxy-3-methylbut-2-enyl diphosphate is bound at residue His-124. Position 124 (His-124) interacts with dimethylallyl diphosphate. Residue His-124 participates in isopentenyl diphosphate binding. The Proton donor role is filled by Glu-126. Position 167 (Thr-167) interacts with (2E)-4-hydroxy-3-methylbut-2-enyl diphosphate. A [4Fe-4S] cluster-binding site is contributed by Cys-197. The (2E)-4-hydroxy-3-methylbut-2-enyl diphosphate site is built by Ser-225, Ser-226, Asn-227, and Ser-269. Dimethylallyl diphosphate contacts are provided by Ser-225, Ser-226, Asn-227, and Ser-269. Isopentenyl diphosphate is bound by residues Ser-225, Ser-226, Asn-227, and Ser-269.

This sequence belongs to the IspH family. Homodimer. [4Fe-4S] cluster serves as cofactor.

It carries out the reaction isopentenyl diphosphate + 2 oxidized [2Fe-2S]-[ferredoxin] + H2O = (2E)-4-hydroxy-3-methylbut-2-enyl diphosphate + 2 reduced [2Fe-2S]-[ferredoxin] + 2 H(+). The catalysed reaction is dimethylallyl diphosphate + 2 oxidized [2Fe-2S]-[ferredoxin] + H2O = (2E)-4-hydroxy-3-methylbut-2-enyl diphosphate + 2 reduced [2Fe-2S]-[ferredoxin] + 2 H(+). It participates in isoprenoid biosynthesis; dimethylallyl diphosphate biosynthesis; dimethylallyl diphosphate from (2E)-4-hydroxy-3-methylbutenyl diphosphate: step 1/1. Its pathway is isoprenoid biosynthesis; isopentenyl diphosphate biosynthesis via DXP pathway; isopentenyl diphosphate from 1-deoxy-D-xylulose 5-phosphate: step 6/6. In terms of biological role, catalyzes the conversion of 1-hydroxy-2-methyl-2-(E)-butenyl 4-diphosphate (HMBPP) into a mixture of isopentenyl diphosphate (IPP) and dimethylallyl diphosphate (DMAPP). Acts in the terminal step of the DOXP/MEP pathway for isoprenoid precursor biosynthesis. This is 4-hydroxy-3-methylbut-2-enyl diphosphate reductase from Cronobacter sakazakii (strain ATCC BAA-894) (Enterobacter sakazakii).